The chain runs to 386 residues: 11-beta-hydroxysteroid dehydrogenase type 2 (386 aa).

NAD(+) is bound at residue 82–111 (TRAVLITGCDTGFGKETAKKLDAMGFTVLA). S219 contributes to the substrate binding site. The Proton acceptor role is filled by Y232.

Belongs to the short-chain dehydrogenases/reductases (SDR) family. As to quaternary structure, interacts with ligand-free cytoplasmic NR3C2. Highly expressed in kidney. Also found in colon and small intestine. Not expressed in the adrenal gland. Expressed in uterus.

The protein resides in the microsome. It localises to the endoplasmic reticulum. It carries out the reaction an 11beta-hydroxysteroid + NAD(+) = an 11-oxosteroid + NADH + H(+). The enzyme catalyses corticosterone + NAD(+) = 11-dehydrocorticosterone + NADH + H(+). The catalysed reaction is 11beta,17beta-dihydroxyandrost-4-ene-3-one + NAD(+) = 17beta-hydroxyandrost-4-ene-3,11-dione + NADH + H(+). It catalyses the reaction 11beta-hydroxyandrost-4-ene-3,17-dione + NAD(+) = androst-4-ene-3,11,17-trione + NADH + H(+). It functions in the pathway steroid metabolism. With respect to regulation, inhibited by glycyrrhetinic acid. Induced by progesterone, through the Ihh signaling pathway. Functionally, catalyzes the conversion of biologically active 11beta-hydroxyglucocorticoids (11beta-hydroxysteroid) such as corticosterone, to inactive 11-ketoglucocorticoids (11-oxosteroid) such as 11-dehydrocorticosterone, in the presence of NAD(+). Functions as a dehydrogenase (oxidase), thereby decreasing the concentration of active glucocorticoids, thus protecting the nonselective mineralocorticoid receptor from occupation by glucocorticoids. Plays an important role in maintaining glucocorticoids balance during preimplantation and protects the fetus from excessive maternal corticosterone exposure. Catalyzes the oxidation of 11beta-hydroxytestosterone (11beta,17beta-dihydroxyandrost-4-ene-3-one) to 11-ketotestosterone (17beta-hydroxyandrost-4-ene-3,11-dione), a major bioactive androgen. Catalyzes the conversion of 11beta-hydroxyandrostenedione (11beta-hydroxyandrost-4-ene-3,17-dione) to 11-ketoandrostenedione (androst-4-ene-3,11,17-trione), which can be further metabolized to 11-ketotestosterone. Converts 7-beta-25-dihydroxycholesterol to 7-oxo-25-hydroxycholesterol in vitro. 7-beta-25-dihydroxycholesterol (not 7-oxo-25-hydroxycholesterol) acts as a ligand for the G-protein-coupled receptor (GPCR) Epstein-Barr virus-induced gene 2 (EBI2) and may thereby regulate immune cell migration. In Mus musculus (Mouse), this protein is 11-beta-hydroxysteroid dehydrogenase type 2 (Hsd11b2).